Here is an 82-residue protein sequence, read N- to C-terminus: Cytochrome b559 subunit alpha (82 aa).

Residues 21 to 35 form a helical membrane-spanning segment; it reads VIHSITIPALFIAGW. Histidine 23 contacts heme.

Belongs to the PsbE/PsbF family. In terms of assembly, heterodimer of an alpha subunit and a beta subunit. PSII is composed of 1 copy each of membrane proteins PsbA, PsbB, PsbC, PsbD, PsbE, PsbF, PsbH, PsbI, PsbJ, PsbK, PsbL, PsbM, PsbT, PsbX, PsbY, PsbZ, Psb30/Ycf12, peripheral proteins PsbO, CyanoQ (PsbQ), PsbU, PsbV and a large number of cofactors. It forms dimeric complexes. Heme b serves as cofactor.

Its subcellular location is the cellular thylakoid membrane. This b-type cytochrome is tightly associated with the reaction center of photosystem II (PSII). PSII is a light-driven water:plastoquinone oxidoreductase that uses light energy to abstract electrons from H(2)O, generating O(2) and a proton gradient subsequently used for ATP formation. It consists of a core antenna complex that captures photons, and an electron transfer chain that converts photonic excitation into a charge separation. The protein is Cytochrome b559 subunit alpha of Nostoc punctiforme (strain ATCC 29133 / PCC 73102).